A 205-amino-acid polypeptide reads, in one-letter code: Adenylyl-sulfate kinase (205 aa).

Residue 31 to 38 (GLSGSGKS) participates in ATP binding. Residue Ser105 is the Phosphoserine intermediate of the active site.

The protein belongs to the APS kinase family.

It carries out the reaction adenosine 5'-phosphosulfate + ATP = 3'-phosphoadenylyl sulfate + ADP + H(+). Its pathway is sulfur metabolism; hydrogen sulfide biosynthesis; sulfite from sulfate: step 2/3. Functionally, catalyzes the synthesis of activated sulfate. The protein is Adenylyl-sulfate kinase of Shewanella pealeana (strain ATCC 700345 / ANG-SQ1).